The following is an 87-amino-acid chain: Phosphocarrier protein HPr (87 aa).

One can recognise an HPr domain in the interval methionine 1–glutamate 87. The Pros-phosphohistidine intermediate role is filled by histidine 15. The residue at position 46 (serine 46) is a Phosphoserine; by HPrK/P.

This sequence belongs to the HPr family.

It is found in the cytoplasm. Its activity is regulated as follows. Phosphorylation on Ser-46 inhibits the phosphoryl transfer from enzyme I to HPr. Functionally, general (non sugar-specific) component of the phosphoenolpyruvate-dependent sugar phosphotransferase system (sugar PTS). This major carbohydrate active-transport system catalyzes the phosphorylation of incoming sugar substrates concomitantly with their translocation across the cell membrane. The phosphoryl group from phosphoenolpyruvate (PEP) is transferred to the phosphoryl carrier protein HPr by enzyme I. Phospho-HPr then transfers it to the PTS EIIA domain. Its function is as follows. P-Ser-HPr interacts with the catabolite control protein A (CcpA), forming a complex that binds to DNA at the catabolite response elements cre, operator sites preceding a large number of catabolite-regulated genes. Thus, P-Ser-HPr is a corepressor in carbon catabolite repression (CCR), a mechanism that allows bacteria to coordinate and optimize the utilization of available carbon sources. P-Ser-HPr also plays a role in inducer exclusion, in which it probably interacts with several non-PTS permeases and inhibits their transport activity. This is Phosphocarrier protein HPr (ptsH) from Halalkalibacterium halodurans (strain ATCC BAA-125 / DSM 18197 / FERM 7344 / JCM 9153 / C-125) (Bacillus halodurans).